Reading from the N-terminus, the 682-residue chain is Methionine--tRNA ligase (682 aa).

Positions 15–25 (PYANGAIHLGH) match the 'HIGH' region motif. 4 residues coordinate Zn(2+): C146, C149, C159, and C162. The 'KMSKS' region motif lies at 331–335 (KMSKS). K334 contacts ATP. The tRNA-binding domain maps to 580–682 (DFAKLDMRVA…SGVTAGMQVK (103 aa)).

This sequence belongs to the class-I aminoacyl-tRNA synthetase family. MetG type 1 subfamily. In terms of assembly, homodimer. Zn(2+) is required as a cofactor.

The protein localises to the cytoplasm. The catalysed reaction is tRNA(Met) + L-methionine + ATP = L-methionyl-tRNA(Met) + AMP + diphosphate. Functionally, is required not only for elongation of protein synthesis but also for the initiation of all mRNA translation through initiator tRNA(fMet) aminoacylation. This is Methionine--tRNA ligase from Haemophilus influenzae (strain PittEE).